We begin with the raw amino-acid sequence, 237 residues long: Phosphoribosylaminoimidazole-succinocarboxamide synthase (237 aa).

The protein belongs to the SAICAR synthetase family.

The catalysed reaction is 5-amino-1-(5-phospho-D-ribosyl)imidazole-4-carboxylate + L-aspartate + ATP = (2S)-2-[5-amino-1-(5-phospho-beta-D-ribosyl)imidazole-4-carboxamido]succinate + ADP + phosphate + 2 H(+). The protein operates within purine metabolism; IMP biosynthesis via de novo pathway; 5-amino-1-(5-phospho-D-ribosyl)imidazole-4-carboxamide from 5-amino-1-(5-phospho-D-ribosyl)imidazole-4-carboxylate: step 1/2. The polypeptide is Phosphoribosylaminoimidazole-succinocarboxamide synthase (Shigella dysenteriae serotype 1 (strain Sd197)).